Reading from the N-terminus, the 427-residue chain is Arginine biosynthesis bifunctional protein ArgJ (427 aa).

Residues Thr174, Lys200, Thr211, Glu291, Asn422, and Thr427 each contribute to the substrate site. Thr211 functions as the Nucleophile in the catalytic mechanism.

It belongs to the ArgJ family. As to quaternary structure, heterotetramer of two alpha and two beta chains.

It localises to the cytoplasm. It carries out the reaction N(2)-acetyl-L-ornithine + L-glutamate = N-acetyl-L-glutamate + L-ornithine. The enzyme catalyses L-glutamate + acetyl-CoA = N-acetyl-L-glutamate + CoA + H(+). It participates in amino-acid biosynthesis; L-arginine biosynthesis; L-ornithine and N-acetyl-L-glutamate from L-glutamate and N(2)-acetyl-L-ornithine (cyclic): step 1/1. It functions in the pathway amino-acid biosynthesis; L-arginine biosynthesis; N(2)-acetyl-L-ornithine from L-glutamate: step 1/4. Catalyzes two activities which are involved in the cyclic version of arginine biosynthesis: the synthesis of N-acetylglutamate from glutamate and acetyl-CoA as the acetyl donor, and of ornithine by transacetylation between N(2)-acetylornithine and glutamate. This chain is Arginine biosynthesis bifunctional protein ArgJ, found in Prochlorococcus marinus (strain MIT 9313).